Reading from the N-terminus, the 528-residue chain is ATP synthase subunit alpha 1 (528 aa).

Residue 169 to 176 participates in ATP binding; sequence GDRQTGKT.

It belongs to the ATPase alpha/beta chains family. F-type ATPases have 2 components, CF(1) - the catalytic core - and CF(0) - the membrane proton channel. CF(1) has five subunits: alpha(3), beta(3), gamma(1), delta(1), epsilon(1). CF(0) has three main subunits: a(1), b(2) and c(9-12). The alpha and beta chains form an alternating ring which encloses part of the gamma chain. CF(1) is attached to CF(0) by a central stalk formed by the gamma and epsilon chains, while a peripheral stalk is formed by the delta and b chains.

The protein localises to the cell membrane. It carries out the reaction ATP + H2O + 4 H(+)(in) = ADP + phosphate + 5 H(+)(out). Functionally, produces ATP from ADP in the presence of a proton gradient across the membrane. The alpha chain is a regulatory subunit. The chain is ATP synthase subunit alpha 1 from Mycoplasmopsis pulmonis (strain UAB CTIP) (Mycoplasma pulmonis).